The following is a 185-amino-acid chain: Ribosome-recycling factor (185 aa).

The disordered stretch occupies residues 137–162; sequence DSIDKMVKDGEVGEDEGRRAEKELDD.

This sequence belongs to the RRF family.

The protein resides in the cytoplasm. Its function is as follows. Responsible for the release of ribosomes from messenger RNA at the termination of protein biosynthesis. May increase the efficiency of translation by recycling ribosomes from one round of translation to another. This chain is Ribosome-recycling factor, found in Streptomyces coelicolor (strain ATCC BAA-471 / A3(2) / M145).